Here is a 200-residue protein sequence, read N- to C-terminus: Nucleoside triphosphate pyrophosphatase (200 aa).

The active-site Proton acceptor is the D75.

Belongs to the Maf family. A divalent metal cation is required as a cofactor.

The protein resides in the cytoplasm. It carries out the reaction a ribonucleoside 5'-triphosphate + H2O = a ribonucleoside 5'-phosphate + diphosphate + H(+). It catalyses the reaction a 2'-deoxyribonucleoside 5'-triphosphate + H2O = a 2'-deoxyribonucleoside 5'-phosphate + diphosphate + H(+). Nucleoside triphosphate pyrophosphatase. May have a dual role in cell division arrest and in preventing the incorporation of modified nucleotides into cellular nucleic acids. The sequence is that of Nucleoside triphosphate pyrophosphatase from Synechococcus sp. (strain CC9311).